A 200-amino-acid chain; its full sequence is MASKLETLKANLEAAFGGLLQSTTEAIGELTIVVKAGDYLNVATRLRDDRSLGFEQCVDLCGVDYQTYADGAYDGPRFAAVLHLLSVQNNWRLRLRVFAPDDEVPILPSVVEIWNSVNWYEREAFDLYGIVFEGHPDLRRILTDYGFIGHPFRKDFPVSGYVEMRYDPEEKRVVYQPVTIEPREITPRVIREDRYGGLKH.

The protein belongs to the complex I 30 kDa subunit family. NDH-1 is composed of 14 different subunits. Subunits NuoB, C, D, E, F, and G constitute the peripheral sector of the complex.

It localises to the cell inner membrane. It catalyses the reaction a quinone + NADH + 5 H(+)(in) = a quinol + NAD(+) + 4 H(+)(out). NDH-1 shuttles electrons from NADH, via FMN and iron-sulfur (Fe-S) centers, to quinones in the respiratory chain. The immediate electron acceptor for the enzyme in this species is believed to be ubiquinone. Couples the redox reaction to proton translocation (for every two electrons transferred, four hydrogen ions are translocated across the cytoplasmic membrane), and thus conserves the redox energy in a proton gradient. The polypeptide is NADH-quinone oxidoreductase subunit C (Paraburkholderia xenovorans (strain LB400)).